Here is a 206-residue protein sequence, read N- to C-terminus: Large ribosomal subunit protein uL4 (206 aa).

The tract at residues 51–76 is disordered; sequence AKTRAEVSGGGIKPWRQKGTGRARQG.

The protein belongs to the universal ribosomal protein uL4 family. Part of the 50S ribosomal subunit.

Its function is as follows. One of the primary rRNA binding proteins, this protein initially binds near the 5'-end of the 23S rRNA. It is important during the early stages of 50S assembly. It makes multiple contacts with different domains of the 23S rRNA in the assembled 50S subunit and ribosome. Forms part of the polypeptide exit tunnel. This chain is Large ribosomal subunit protein uL4, found in Clostridium kluyveri (strain ATCC 8527 / DSM 555 / NBRC 12016 / NCIMB 10680 / K1).